Consider the following 135-residue polypeptide: Ribosome-binding factor A (135 aa).

The protein belongs to the RbfA family. As to quaternary structure, monomer. Binds 30S ribosomal subunits, but not 50S ribosomal subunits or 70S ribosomes.

Its subcellular location is the cytoplasm. Functionally, one of several proteins that assist in the late maturation steps of the functional core of the 30S ribosomal subunit. Associates with free 30S ribosomal subunits (but not with 30S subunits that are part of 70S ribosomes or polysomes). Required for efficient processing of 16S rRNA. May interact with the 5'-terminal helix region of 16S rRNA. The polypeptide is Ribosome-binding factor A (Hahella chejuensis (strain KCTC 2396)).